Here is a 234-residue protein sequence, read N- to C-terminus: LexA repressor (234 aa).

The segment at residues 41-61 (RAEIANELGFKSANAAEEHLQ) is a DNA-binding region (H-T-H motif). Residues Ser-152 and Lys-189 each act as for autocatalytic cleavage activity in the active site.

This sequence belongs to the peptidase S24 family. As to quaternary structure, homodimer.

It catalyses the reaction Hydrolysis of Ala-|-Gly bond in repressor LexA.. Functionally, represses a number of genes involved in the response to DNA damage (SOS response), including recA and lexA. In the presence of single-stranded DNA, RecA interacts with LexA causing an autocatalytic cleavage which disrupts the DNA-binding part of LexA, leading to derepression of the SOS regulon and eventually DNA repair. In Polaromonas sp. (strain JS666 / ATCC BAA-500), this protein is LexA repressor.